The sequence spans 127 residues: MFRTMLGGKIHRATVTEADLNYVGSITVDQDLLDAAGIYPNEKVAIVNNNNGERFETYTIAGKRGSGVICLNGAAARLVQKSDIVIIMSYVQLSEPEIAAHEPKVVLVDGNNKIRDIISYEPPHTVL.

The active-site Schiff-base intermediate with substrate; via pyruvic acid is serine 25. Serine 25 bears the Pyruvic acid (Ser) mark. Threonine 57 is a binding site for substrate. The active-site Proton donor is the tyrosine 58. Residue glycine 73–alanine 75 participates in substrate binding.

This sequence belongs to the PanD family. As to quaternary structure, heterooctamer of four alpha and four beta subunits. The cofactor is pyruvate. Is synthesized initially as an inactive proenzyme, which is activated by self-cleavage at a specific serine bond to produce a beta-subunit with a hydroxyl group at its C-terminus and an alpha-subunit with a pyruvoyl group at its N-terminus.

It localises to the cytoplasm. The enzyme catalyses L-aspartate + H(+) = beta-alanine + CO2. The protein operates within cofactor biosynthesis; (R)-pantothenate biosynthesis; beta-alanine from L-aspartate: step 1/1. Catalyzes the pyruvoyl-dependent decarboxylation of aspartate to produce beta-alanine. The sequence is that of Aspartate 1-decarboxylase from Neisseria meningitidis serogroup A / serotype 4A (strain DSM 15465 / Z2491).